A 352-amino-acid chain; its full sequence is DNA ADP-ribosyl glycohydrolase (352 aa).

Residues 1–155 enclose the Macro domain; the sequence is MITYGSGDLL…IYPPSGGSRA (155 aa). ADP-D-ribose-binding positions include 8–9, 20–22, 31–34, and Thr79; these read DL, TVN, and IALQ. The active-site Nucleophile is Lys80. An ADP-D-ribose-binding site is contributed by 117 to 121; that stretch reads GVGNG. The tract at residues 164–352 is interaction with DarT; sequence MTWGRAVILE…VALDRILMTA (189 aa).

It belongs to the DarG ADP-ribosyl glycohydrolase family. As to quaternary structure, interacts (via C-terminus) with cognate toxin DarT; this heterodimeric complex neutralizes the toxic effect of DarT by preventing ssDNA binding to DarT and consequently inactivating the toxin by direct protein-protein interactions.

It carries out the reaction an N-(ADP-alpha-D-ribosyl)-thymidine in DNA + H2O = a thymidine in DNA + ADP-D-ribose. Functionally, antitoxin component of the hybrid type II/IV toxin-antitoxin (TA) system DarTG, which plays a crucial role in controlling bacterial growth and bacteriophage infection. De-ADP-ribosylates DNA (probably) modified on thymidine by its cognate toxin DarT, which neutralizes the activity of cognate toxin DarT. This is DNA ADP-ribosyl glycohydrolase from Mycobacterium bovis (strain BCG / Pasteur 1173P2).